A 1066-amino-acid polypeptide reads, in one-letter code: Hemoglobin and hemoglobin-haptoglobin-binding protein C (1066 aa).

A signal peptide spans 1–24 (MTNFKFTLLARSIAFALNASTAYA). 7 consecutive repeat copies span residues 26-29 (QPTN), 30-33 (QPTN), 34-37 (QPTN), 38-41 (QPTN), 42-45 (QPTN), 46-49 (QPTN), and 50-53 (QPTN). The 7 X 4 AA tandem repeats of Q-P-T-N stretch occupies residues 26 to 53 (QPTNQPTNQPTNQPTNQPTNQPTNQPTN). Low complexity predominate over residues 26 to 54 (QPTNQPTNQPTNQPTNQPTNQPTNQPTNQ). Positions 26–57 (QPTNQPTNQPTNQPTNQPTNQPTNQPTNQDSN) are disordered. Positions 63–70 (EQINVSGS) match the TonB box motif. The TBDR plug domain occupies 66–200 (NVSGSTETIN…LGGSVIFETK (135 aa)). The TBDR beta-barrel domain maps to 208-1066 (DKDYYVSYKR…NYRMSVQFEF (859 aa)). The TonB C-terminal box signature appears at 1049-1066 (NRLYAPGRNYRMSVQFEF).

Belongs to the TonB-dependent receptor family. Hemoglobin/haptoglobin binding protein subfamily.

It localises to the cell outer membrane. Functionally, acts as a receptor for hemoglobin or the hemoglobin/haptoglobin complex of the human host and is required for heme uptake. The chain is Hemoglobin and hemoglobin-haptoglobin-binding protein C (hgpC) from Haemophilus influenzae.